The primary structure comprises 655 residues: p-hydroxybenzoic acid efflux pump subunit AaeB (655 aa).

Residues 1-12 (MGIFSIANQHIR) are Periplasmic-facing. Residues 13 to 33 (FAVKLATAIVLALFVGFHFQL) form a helical membrane-spanning segment. Over 34–37 (ETPR) the chain is Cytoplasmic. Residues 38-58 (WAVLTAAIVAAGTAFAAGGEP) traverse the membrane as a helical segment. At 59–68 (YSGAIRYRGF) the chain is on the periplasmic side. The chain crosses the membrane as a helical span at residues 69 to 89 (LRIIGTFIGCIAGLVIIIAMI). The Cytoplasmic segment spans residues 90–92 (RAP). A helical transmembrane segment spans residues 93–113 (LLMILVCCIWAGFCTWISSLV). Over 114–120 (RIENSYA) the chain is Periplasmic. The helical transmembrane segment at 121-141 (WGLAGYTALIIVITIQPEPLL) threads the bilayer. At 142–151 (TPQFAVERCS) the chain is on the cytoplasmic side. Residues 152-172 (EIVIGIVCAIMADLLFSPRSI) traverse the membrane as a helical segment. Over 173 to 369 (KQEVDRELES…RTTLSCILGT (197 aa)) the chain is Periplasmic. Residues 370-390 (LFWLWTGWTSGSGAMVMIAVV) form a helical membrane-spanning segment. Residues 391–406 (TSLAMRLPNPRMVAID) are Cytoplasmic-facing. The chain crosses the membrane as a helical span at residues 407-427 (FIYGTLAALPLGLLYFLVIIP). At 428–430 (NTQ) the chain is on the periplasmic side. Residues 431–451 (QSMLLLCISLAVLGFFLGIEV) traverse the membrane as a helical segment. The Cytoplasmic segment spans residues 452–458 (QKRRLGS). A helical transmembrane segment spans residues 459-479 (MGALASTINIIVLDNPMTFHF). Over 480–481 (SQ) the chain is Periplasmic. The helical transmembrane segment at 482-502 (FLDSALGQIVGCVLAFTVILL) threads the bilayer. Topologically, residues 503–655 (VRDKSRDRTG…HKYQHALTDS (153 aa)) are cytoplasmic.

The protein belongs to the aromatic acid exporter ArAE (TC 2.A.85) family.

The protein resides in the cell inner membrane. In terms of biological role, forms an efflux pump with AaeA. Could function as a metabolic relief valve, allowing to eliminate certain compounds when they accumulate to high levels in the cell. Substrates are p-hydroxybenzoic acid (pHBA), 6-hydroxy-2-naphthoic and 2-hydroxycinnamate. The protein is p-hydroxybenzoic acid efflux pump subunit AaeB of Escherichia coli (strain K12).